We begin with the raw amino-acid sequence, 408 residues long: 2,3-bisphosphoglycerate-independent phosphoglycerate mutase 1 (408 aa).

It belongs to the BPG-independent phosphoglycerate mutase family. A-PGAM subfamily. As to quaternary structure, monomer. The cofactor is Mn(2+).

The catalysed reaction is (2R)-2-phosphoglycerate = (2R)-3-phosphoglycerate. Its pathway is carbohydrate degradation; glycolysis; pyruvate from D-glyceraldehyde 3-phosphate: step 3/5. Its function is as follows. Catalyzes the interconversion of 2-phosphoglycerate and 3-phosphoglycerate. This is 2,3-bisphosphoglycerate-independent phosphoglycerate mutase 1 (apgM1) from Archaeoglobus fulgidus (strain ATCC 49558 / DSM 4304 / JCM 9628 / NBRC 100126 / VC-16).